A 378-amino-acid chain; its full sequence is MAANRDYYDVLGVSRDASDAEISKAYRKLAKKYHPDLNHEAGAEEKYKEVNEAYEVLHDPQKRQQYDQFGQAGMNGQGGFGGQYGGQGFGGADFGDFGDIFSSFFGGARQQVDPTAPQRGADLDYTMTIDFMDAIKGKTSEISYSRSTTCEVCKGSGAEKGTHPITCDKCGGSGMMTITQRSVLGMIQRQTTCDKCTGSGVIIQHPCHNCHGKGVKTQKQTLQVKVPAGIDNGQQIRLAGQGEAGKNGGPYGDLYIVFRVRPSKDFTRRGQTIYTTVPISFAQATLGDEINVKTVYGDTKLKIPAGTQPNQKFTLKEKGVPSLRGGSTGDQVTTVEIVIPKSINEAQRKALLEFVKASGGSIAPQEKGFFERLKEKLS.

The region spanning 6–70 (DYYDVLGVSR…QKRQQYDQFG (65 aa)) is the J domain. The CR-type zinc-finger motif lies at 137–219 (GKTSEISYSR…CHGKGVKTQK (83 aa)). Zn(2+)-binding residues include Cys150, Cys153, Cys167, Cys170, Cys193, Cys196, Cys207, and Cys210. CXXCXGXG motif repeat units follow at residues 150–157 (CEVCKGSG), 167–174 (CDKCGGSG), 193–200 (CDKCTGSG), and 207–214 (CHNCHGKG).

This sequence belongs to the DnaJ family. As to quaternary structure, homodimer. Zn(2+) is required as a cofactor.

It is found in the cytoplasm. Participates actively in the response to hyperosmotic and heat shock by preventing the aggregation of stress-denatured proteins and by disaggregating proteins, also in an autonomous, DnaK-independent fashion. Unfolded proteins bind initially to DnaJ; upon interaction with the DnaJ-bound protein, DnaK hydrolyzes its bound ATP, resulting in the formation of a stable complex. GrpE releases ADP from DnaK; ATP binding to DnaK triggers the release of the substrate protein, thus completing the reaction cycle. Several rounds of ATP-dependent interactions between DnaJ, DnaK and GrpE are required for fully efficient folding. Also involved, together with DnaK and GrpE, in the DNA replication of plasmids through activation of initiation proteins. The sequence is that of Chaperone protein DnaJ from Lactobacillus delbrueckii subsp. bulgaricus (strain ATCC 11842 / DSM 20081 / BCRC 10696 / JCM 1002 / NBRC 13953 / NCIMB 11778 / NCTC 12712 / WDCM 00102 / Lb 14).